The sequence spans 420 residues: MKGPWLVLAALCLSLANLGPRGEDGLDFPEYDGEDRVIHISLKNYKAALKKYEVLALLYHEPIGDDKASQRQFEMEELILELAAQVLEDKGVGFGLVDSEDDAAVAKKLGLDEEDSIYVFKDDEMIEYDGEFSADTLVEFLLDVLEDPVEFIDGSHELAAFENLDDEPKLIGYFKNEDSEHYKAYEDAAEEFHPYIPFFATFDAKVAKTLTLKLNEIDYYEPFHDEPITIPSKPNSEKEIVDFLHQHKRPTLRKLRPDSMYETWEDDLNGIHIVAFAEEDDPDGYEFLQIIKEVAEDNTDNPDLSIIWIDPEDFPLLIPYWEEKFGIDLSRPHIGVVNVTDADSVWMDMDDEEDLPTVDELEDWIEDVLEGEVNTEDDDDDDDDDDDDDDDDDDDDDDDDDDDDDDDDDDDDDDDDDDDD.

An N-terminal signal peptide occupies residues methionine 1 to glycine 22. An N-linked (GlcNAc...) asparagine glycan is attached at asparagine 338. Residues leucine 369–aspartate 420 are disordered.

It belongs to the calsequestrin family. Monomer; increases in response to a depletion of intracellular calcium. Homodimer. Homotetramer and homopolymer. Can form linear homooligomers. Ca(2+) ions promote oligomerization. As to expression, detected in skeletal muscle (at protein level). Detected in skeletal muscle.

It localises to the endoplasmic reticulum. The protein resides in the sarcoplasmic reticulum. Its subcellular location is the sarcoplasmic reticulum lumen. It is found in the sarcoplasmic reticulum membrane. The protein localises to the mitochondrion matrix. Calsequestrin is a high-capacity, moderate affinity, calcium-binding protein and thus acts as an internal calcium store in muscle. Calcium ions are bound by clusters of acidic residues at the protein surface, often at the interface between subunits. Can bind around 80 Ca(2+) ions. Regulates the release of lumenal Ca(2+) via the calcium release channel RYR1; this plays an important role in triggering muscle contraction. Negatively regulates store-operated Ca(2+) entry (SOCE) activity. The protein is Calsequestrin-1 of Pelophylax lessonae (Pool frog).